The primary structure comprises 311 residues: MKVAVIGAAGGIGQALALLLKNRLPAGSDLALYDIAPVTPGVAADLSHIPTPVSIKGYCGEDPTPALEGADVVLISAGVARKPGMDRSDLFNINAGIVKSLTEKIAVTCPKACIGIITNPVNTTVAIAAEVLKKAGVYDKNKLFGVTTLDVIRSETFVAELKDKDPGEIRVPVIGGHSGVTILPLLSQVQGVEFTAEEVAALTPRIQNAGTEVVEAKAGGGSATLSMGQAACRFGLSLVKALSGEEGVVECAYVEGNGEHARFFAQPILLGKNGVEEIQSYGELSAFEQEALESMLDTLRGDIKIGEEFVQ.

Residues 7-13 (GAAGGIG) and aspartate 34 each bind NAD(+). Arginine 81 and arginine 87 together coordinate substrate. NAD(+) contacts are provided by residues asparagine 94 and 117–119 (ITN). Substrate is bound by residues asparagine 119 and arginine 153. The active-site Proton acceptor is histidine 177. Methionine 227 provides a ligand contact to NAD(+).

The protein belongs to the LDH/MDH superfamily. MDH type 1 family. As to quaternary structure, homodimer.

The catalysed reaction is (S)-malate + NAD(+) = oxaloacetate + NADH + H(+). In terms of biological role, catalyzes the reversible oxidation of malate to oxaloacetate. This chain is Malate dehydrogenase, found in Aliivibrio fischeri (strain ATCC 700601 / ES114) (Vibrio fischeri).